Consider the following 271-residue polypeptide: Putative phosphoenolpyruvate synthase regulatory protein (271 aa).

Residue 151 to 158 (GVSRSGKT) participates in ADP binding.

This sequence belongs to the pyruvate, phosphate/water dikinase regulatory protein family. PSRP subfamily.

The enzyme catalyses [pyruvate, water dikinase] + ADP = [pyruvate, water dikinase]-phosphate + AMP + H(+). It catalyses the reaction [pyruvate, water dikinase]-phosphate + phosphate + H(+) = [pyruvate, water dikinase] + diphosphate. Functionally, bifunctional serine/threonine kinase and phosphorylase involved in the regulation of the phosphoenolpyruvate synthase (PEPS) by catalyzing its phosphorylation/dephosphorylation. The protein is Putative phosphoenolpyruvate synthase regulatory protein of Burkholderia ambifaria (strain MC40-6).